Here is a 599-residue protein sequence, read N- to C-terminus: Putative sensor histidine kinase NtrY-like (599 aa).

A run of 4 helical transmembrane segments spans residues 17 to 37 (VLIF…FYVI), 44 to 64 (FSTI…LGVV), 85 to 105 (IVIA…VFSV), and 285 to 305 (IMFI…GVIF). The HAMP domain maps to 307–361 (AKIVKPIKKLVTATDNVKDGDLTVQVPENEVDKDEIGTLYVAFNRMIKQLSRQQR). The Histidine kinase domain maps to 378 to 589 (KVAHEIKNPL…IIDIKFDLKE (212 aa)). Position 381 is a phosphohistidine; by autocatalysis (His-381).

The protein localises to the cell membrane. It carries out the reaction ATP + protein L-histidine = ADP + protein N-phospho-L-histidine.. In terms of biological role, member of the two-component regulatory system RC0948/RC0849. This Rickettsia conorii (strain ATCC VR-613 / Malish 7) protein is Putative sensor histidine kinase NtrY-like.